The following is a 259-amino-acid chain: UPF0246 protein SG0407 (259 aa).

Belongs to the UPF0246 family.

This Sodalis glossinidius (strain morsitans) protein is UPF0246 protein SG0407.